We begin with the raw amino-acid sequence, 184 residues long: ATP synthase subunit delta (184 aa).

It belongs to the ATPase delta chain family. F-type ATPases have 2 components, F(1) - the catalytic core - and F(0) - the membrane proton channel. F(1) has five subunits: alpha(3), beta(3), gamma(1), delta(1), epsilon(1). F(0) has three main subunits: a(1), b(2) and c(10-14). The alpha and beta chains form an alternating ring which encloses part of the gamma chain. F(1) is attached to F(0) by a central stalk formed by the gamma and epsilon chains, while a peripheral stalk is formed by the delta and b chains.

Its subcellular location is the cell inner membrane. In terms of biological role, f(1)F(0) ATP synthase produces ATP from ADP in the presence of a proton or sodium gradient. F-type ATPases consist of two structural domains, F(1) containing the extramembraneous catalytic core and F(0) containing the membrane proton channel, linked together by a central stalk and a peripheral stalk. During catalysis, ATP synthesis in the catalytic domain of F(1) is coupled via a rotary mechanism of the central stalk subunits to proton translocation. Functionally, this protein is part of the stalk that links CF(0) to CF(1). It either transmits conformational changes from CF(0) to CF(1) or is implicated in proton conduction. In Rickettsia massiliae (strain Mtu5), this protein is ATP synthase subunit delta.